The primary structure comprises 137 residues: Nucleoside diphosphate kinase (137 aa).

Lys9, Phe57, Arg85, Thr91, Arg102, and Asn112 together coordinate ATP. His115 serves as the catalytic Pros-phosphohistidine intermediate.

The protein belongs to the NDK family. In terms of assembly, homotetramer. Mg(2+) is required as a cofactor.

The protein resides in the cytoplasm. It carries out the reaction a 2'-deoxyribonucleoside 5'-diphosphate + ATP = a 2'-deoxyribonucleoside 5'-triphosphate + ADP. The catalysed reaction is a ribonucleoside 5'-diphosphate + ATP = a ribonucleoside 5'-triphosphate + ADP. Its function is as follows. Major role in the synthesis of nucleoside triphosphates other than ATP. The ATP gamma phosphate is transferred to the NDP beta phosphate via a ping-pong mechanism, using a phosphorylated active-site intermediate. This Syntrophotalea carbinolica (strain DSM 2380 / NBRC 103641 / GraBd1) (Pelobacter carbinolicus) protein is Nucleoside diphosphate kinase.